Consider the following 257-residue polypeptide: MVSWMICRLVVLVFGMLCPAYASYKAVKTKNIREYVRWMMYWIVFALFMAAEIVTDIFISWFPFYYEIKMAFVLWLLSPYTKGASLLYRKFVHPSLSRHEKEIDAYIVQAKERSYETVLSFGKRGLNIAASAAVQAATKSQGALAGRLRSFSMQDLRSISDAPAPAYHDPLYLEDQVSHRRPPIGYRAGGLQDSDTEDECWSDTEAVPRAPARPREKPLIRSQSLRVVKRKPPVREGTSRSLKVRTRKKTVPSDVDS.

2 helical membrane passes run 1-21 and 42-62; these read MVSWMICRLVVLVFGMLCPAY and WIVFALFMAAEIVTDIFISWF. Phosphoserine occurs at positions 152 and 194. The interval 183 to 257 is disordered; that stretch reads PIGYRAGGLQ…KKTVPSDVDS (75 aa). Thr196 carries the phosphothreonine modification. Ser202 carries the post-translational modification Phosphoserine. Thr250 bears the Phosphothreonine mark. Ser253 is modified (phosphoserine).

Belongs to the DP1 family. As to expression, expressed in circumvallate papillae and testis.

The protein resides in the endoplasmic reticulum membrane. Microtubule-binding protein required to ensure proper cell division and nuclear envelope reassembly by sequestering the endoplasmic reticulum away from chromosomes during mitosis. Probably acts by clearing the endoplasmic reticulum membrane from metaphase chromosomes. The polypeptide is Receptor expression-enhancing protein 4 (REEP4) (Homo sapiens (Human)).